The chain runs to 64 residues: Alpha-conotoxin-like Ac1.1a (64 aa).

The N-terminal stretch at 1–21 (MGMRMMFTLFLLVVLTTTVVS) is a signal peptide. Residues 22–47 (YPSDSASDGRDDEAKDERSDMYELKR) constitute a propeptide that is removed on maturation. Disulfide bonds link Cys-51-Cys-56 and Cys-52-Cys-62. The residue at position 62 (Cys-62) is a Cysteine amide.

It belongs to the conotoxin A superfamily. Expressed by the venom duct.

It is found in the secreted. In terms of biological role, alpha-conotoxins act on postsynaptic membranes, they bind to the nicotinic acetylcholine receptors (nAChR) and thus inhibit them. This chain is Alpha-conotoxin-like Ac1.1a, found in Conus achatinus (Little frog cone).